The sequence spans 316 residues: Ribose-phosphate pyrophosphokinase (316 aa).

Residues 41 to 43 (DGE) and 100 to 101 (RQ) contribute to the ATP site. 2 residues coordinate Mg(2+): His134 and Asp174. Lys197 is a catalytic residue. Residues Arg199, Asp223, and 227–231 (DTAGT) each bind D-ribose 5-phosphate.

It belongs to the ribose-phosphate pyrophosphokinase family. Class I subfamily. In terms of assembly, homohexamer. Requires Mg(2+) as cofactor.

The protein resides in the cytoplasm. The catalysed reaction is D-ribose 5-phosphate + ATP = 5-phospho-alpha-D-ribose 1-diphosphate + AMP + H(+). It functions in the pathway metabolic intermediate biosynthesis; 5-phospho-alpha-D-ribose 1-diphosphate biosynthesis; 5-phospho-alpha-D-ribose 1-diphosphate from D-ribose 5-phosphate (route I): step 1/1. Its function is as follows. Involved in the biosynthesis of the central metabolite phospho-alpha-D-ribosyl-1-pyrophosphate (PRPP) via the transfer of pyrophosphoryl group from ATP to 1-hydroxyl of ribose-5-phosphate (Rib-5-P). This chain is Ribose-phosphate pyrophosphokinase, found in Caldanaerobacter subterraneus subsp. tengcongensis (strain DSM 15242 / JCM 11007 / NBRC 100824 / MB4) (Thermoanaerobacter tengcongensis).